The following is a 316-amino-acid chain: Meiotically up-regulated gene 154 protein (316 aa).

A run of 4 helical transmembrane segments spans residues 41–61, 88–108, 159–179, and 186–206; these read YSIPFSLAVNFIFLLMRIYIK, AFLSFLSICFLFISFLNFIFS, FLLNFACLFSPAHALILWFYS, and LLTFLLSFTTLHFVNKFSLLL. A disordered region spans residues 291 to 316; that stretch reads HDSGISRDSSSPFKRFPHLSDGSSRF.

The protein localises to the endoplasmic reticulum membrane. Its function is as follows. Has a role in meiosis. In Schizosaccharomyces pombe (strain 972 / ATCC 24843) (Fission yeast), this protein is Meiotically up-regulated gene 154 protein (mug154).